The primary structure comprises 347 residues: Beta carbonic anhydrase 1, chloroplastic (347 aa).

A chloroplast-targeting transit peptide spans 1–113 (MSTAPLSGFF…AAAKVEQITA (113 aa)). Position 114 is an N-acetylalanine (alanine 114). Serine 175 is subject to Phosphoserine. At tyrosine 203 the chain carries Phosphotyrosine. Serine 266 carries the post-translational modification Phosphoserine. At cysteine 280 the chain carries S-nitrosocysteine.

Belongs to the beta-class carbonic anhydrase family. Homohexamer. S-nitrosylation at Cys-280 is up-regulated during nitrosative burst and suppresses both binding of salicylic acid and carbonic anhydrase activity. S-nitrosylated in response to an avirulent but not to a virulent bacterial strain. In terms of tissue distribution, strongly expressed in aerial tissues including leaves, stems, flowers and siliques. Accumulates in both guard cells and mesophyll cells.

The protein resides in the plastid. It is found in the chloroplast stroma. The protein localises to the cell membrane. It catalyses the reaction hydrogencarbonate + H(+) = CO2 + H2O. Its function is as follows. Reversible hydration of carbon dioxide. Required for photosynthesis in cotyledons. Binds salicylic acid. Together with BCA4, involved in the CO(2) signaling pathway which controls gas-exchange between plants and the atmosphere by modulating stomatal development and movements. Promotes water use efficiency. The sequence is that of Beta carbonic anhydrase 1, chloroplastic from Arabidopsis thaliana (Mouse-ear cress).